A 232-amino-acid chain; its full sequence is U2 small nuclear ribonucleoprotein B'' (232 aa).

The region spanning 10–89 is the RRM 1 domain; sequence QSIYIQNLNE…KPMRLQYAKA (80 aa). The disordered stretch occupies residues 100–157; the sequence is TFVPKDKKRKQEEKVERKREDSQRPNTANGPSANGPSANNGVPAPSFQPSGQETMPPN. Over residues 108-122 the composition is skewed to basic and acidic residues; it reads RKQEEKVERKREDSQ. Composition is skewed to polar residues over residues 123–139 and 146–156; these read RPNT…SANN and FQPSGQETMPP. An RRM 2 domain is found at 158-232; the sequence is NILFIQNLPH…NPMVISFAKK (75 aa).

It belongs to the RRM U1 A/B'' family. Component of the spliceosome where it is associated with snRNP U2.

It is found in the nucleus. The protein localises to the cajal body. The protein resides in the nucleoplasm. Its subcellular location is the cytoplasm. Involved in nuclear pre-mRNA splicing. The polypeptide is U2 small nuclear ribonucleoprotein B'' (U2B'') (Arabidopsis thaliana (Mouse-ear cress)).